Here is a 101-residue protein sequence, read N- to C-terminus: Large ribosomal subunit protein uL23 (101 aa).

It belongs to the universal ribosomal protein uL23 family. As to quaternary structure, part of the 50S ribosomal subunit. Contacts protein L29, and trigger factor when it is bound to the ribosome.

Functionally, one of the early assembly proteins it binds 23S rRNA. One of the proteins that surrounds the polypeptide exit tunnel on the outside of the ribosome. Forms the main docking site for trigger factor binding to the ribosome. In Mannheimia succiniciproducens (strain KCTC 0769BP / MBEL55E), this protein is Large ribosomal subunit protein uL23.